The following is a 166-amino-acid chain: Small ribosomal subunit protein uS9 (166 aa).

The span at 1 to 16 (MSDTTNEVEETYEVDE) shows a compositional bias: acidic residues. Residues 1-45 (MSDTTNEVEETYEVDEQGIAYSSESAPSADAPLRPATIAPANATG) are disordered.

This sequence belongs to the universal ribosomal protein uS9 family.

The polypeptide is Small ribosomal subunit protein uS9 (Nocardioides sp. (strain ATCC BAA-499 / JS614)).